A 94-amino-acid chain; its full sequence is Large ribosomal subunit protein uL23 (94 aa).

This sequence belongs to the universal ribosomal protein uL23 family. As to quaternary structure, part of the 50S ribosomal subunit. Contacts protein L29, and trigger factor when it is bound to the ribosome.

In terms of biological role, one of the early assembly proteins it binds 23S rRNA. One of the proteins that surrounds the polypeptide exit tunnel on the outside of the ribosome. Forms the main docking site for trigger factor binding to the ribosome. The polypeptide is Large ribosomal subunit protein uL23 (Geobacter sulfurreducens (strain ATCC 51573 / DSM 12127 / PCA)).